A 383-amino-acid polypeptide reads, in one-letter code: Succinyl-diaminopimelate desuccinylase (383 aa).

His73 contributes to the Zn(2+) binding site. Residue Asp75 is part of the active site. Residue Asp107 participates in Zn(2+) binding. Catalysis depends on Glu141, which acts as the Proton acceptor. Positions 142, 170, and 356 each coordinate Zn(2+).

It belongs to the peptidase M20A family. DapE subfamily. As to quaternary structure, homodimer. Zn(2+) is required as a cofactor. Co(2+) serves as cofactor.

The catalysed reaction is N-succinyl-(2S,6S)-2,6-diaminopimelate + H2O = (2S,6S)-2,6-diaminopimelate + succinate. The protein operates within amino-acid biosynthesis; L-lysine biosynthesis via DAP pathway; LL-2,6-diaminopimelate from (S)-tetrahydrodipicolinate (succinylase route): step 3/3. Catalyzes the hydrolysis of N-succinyl-L,L-diaminopimelic acid (SDAP), forming succinate and LL-2,6-diaminopimelate (DAP), an intermediate involved in the bacterial biosynthesis of lysine and meso-diaminopimelic acid, an essential component of bacterial cell walls. The protein is Succinyl-diaminopimelate desuccinylase of Pseudomonas syringae pv. tomato (strain ATCC BAA-871 / DC3000).